Here is a 494-residue protein sequence, read N- to C-terminus: MTNWQQQLPLTDTQKNELDKSVLRYLNWNYKQTVRHEHAQDYESVRHAIVTLSGFLLQESVDRQEFISNNDTSNESMVDIDELLLPKKWNSIVRLQKKIIELEQNTETLVSQIKDLNTQVSELAQFKPTTSNGTSAHNVLKWIPRNLPSCLINVESSVTSVKLHPNLPIVFVATDHGKLYAFDLFNYTIPLASLQSHTKAITSMDVLFTNFTNSSKKNYLVVVTASKDLQIHVFKWVSEECKFQQIRSLLGHEHIVSAVKIWQKNNDVHIASCSRDQTVKIWDFHNGWSLKTFQPHSQWVRSIDVLGDYIISGSHDTTLRLTHWPSGNGLSVGTGHEFPIEKVKFIHFIEDSPEIRFRTPSTDRYKNWGMQYCVSASRDRTIKIWEIPLPTLMAHRAPIPNPTDSNFRCVLTFKGHLSWVRDISIRGQYLFSCADDKSVRCWDLNTGQCLHVWEKLHTGFVNCLDLDVDFDSNVTPRQMMVTGGLDCKSNVFMR.

The region spanning 14-46 (QKNELDKSVLRYLNWNYKQTVRHEHAQDYESVR) is the LisH domain. A coiled-coil region spans residues 90 to 123 (NSIVRLQKKIIELEQNTETLVSQIKDLNTQVSEL). WD repeat units lie at residues 153 to 192 (NVES…IPLA), 196 to 244 (SHTK…CKFQ), 251 to 292 (GHEH…SLKT), 295 to 334 (PHSQ…SVGT), 347 to 395 (HFIE…LMAH), 415 to 454 (GHLS…HVWE), and 457 to 492 (HTGF…SNVF).

Belongs to the WD repeat LIS1/nudF family. In terms of assembly, self-associates. Interacts with NDL1 and dynein.

The protein localises to the cytoplasm. The protein resides in the cytoskeleton. It is found in the spindle pole. Positively regulates the activity of the minus-end directed microtubule motor protein dynein. Plays a central role in positioning the mitotic spindle at the bud neck during cell division. Targets cytoplasmic dynein to microtubule plus ends, thereby promoting dynein-mediated microtubule sliding along the bud cortex and consequently the movement of the mitotic spindle to the bud neck. The protein is Nuclear distribution protein PAC1 of Saccharomyces cerevisiae (strain Lalvin EC1118 / Prise de mousse) (Baker's yeast).